Reading from the N-terminus, the 291-residue chain is ATP synthase gamma chain (291 aa).

Belongs to the ATPase gamma chain family. F-type ATPases have 2 components, CF(1) - the catalytic core - and CF(0) - the membrane proton channel. CF(1) has five subunits: alpha(3), beta(3), gamma(1), delta(1), epsilon(1). CF(0) has three main subunits: a, b and c.

It is found in the cell inner membrane. Its function is as follows. Produces ATP from ADP in the presence of a proton gradient across the membrane. The gamma chain is believed to be important in regulating ATPase activity and the flow of protons through the CF(0) complex. The polypeptide is ATP synthase gamma chain (Burkholderia mallei (strain NCTC 10247)).